We begin with the raw amino-acid sequence, 511 residues long: ATP synthase subunit alpha (511 aa).

169–176 provides a ligand contact to ATP; the sequence is GDRQTGKT.

This sequence belongs to the ATPase alpha/beta chains family. In terms of assembly, F-type ATPases have 2 components, CF(1) - the catalytic core - and CF(0) - the membrane proton channel. CF(1) has five subunits: alpha(3), beta(3), gamma(1), delta(1), epsilon(1). CF(0) has three main subunits: a(1), b(2) and c(9-12). The alpha and beta chains form an alternating ring which encloses part of the gamma chain. CF(1) is attached to CF(0) by a central stalk formed by the gamma and epsilon chains, while a peripheral stalk is formed by the delta and b chains.

The protein resides in the cell inner membrane. The enzyme catalyses ATP + H2O + 4 H(+)(in) = ADP + phosphate + 5 H(+)(out). Functionally, produces ATP from ADP in the presence of a proton gradient across the membrane. The alpha chain is a regulatory subunit. This is ATP synthase subunit alpha from Bartonella quintana (strain Toulouse) (Rochalimaea quintana).